The sequence spans 89 residues: Small ribosomal subunit protein uS15 (89 aa).

It belongs to the universal ribosomal protein uS15 family. Part of the 30S ribosomal subunit. Forms a bridge to the 50S subunit in the 70S ribosome, contacting the 23S rRNA.

In terms of biological role, one of the primary rRNA binding proteins, it binds directly to 16S rRNA where it helps nucleate assembly of the platform of the 30S subunit by binding and bridging several RNA helices of the 16S rRNA. Forms an intersubunit bridge (bridge B4) with the 23S rRNA of the 50S subunit in the ribosome. The sequence is that of Small ribosomal subunit protein uS15 from Pseudomonas entomophila (strain L48).